We begin with the raw amino-acid sequence, 691 residues long: Elongation factor G (691 aa).

One can recognise a tr-type G domain in the interval E8–V282. GTP-binding positions include A17–T24, D81–H85, and N135–D138.

This sequence belongs to the TRAFAC class translation factor GTPase superfamily. Classic translation factor GTPase family. EF-G/EF-2 subfamily.

The protein resides in the cytoplasm. Catalyzes the GTP-dependent ribosomal translocation step during translation elongation. During this step, the ribosome changes from the pre-translocational (PRE) to the post-translocational (POST) state as the newly formed A-site-bound peptidyl-tRNA and P-site-bound deacylated tRNA move to the P and E sites, respectively. Catalyzes the coordinated movement of the two tRNA molecules, the mRNA and conformational changes in the ribosome. In Prochlorococcus marinus (strain MIT 9312), this protein is Elongation factor G.